A 93-amino-acid chain; its full sequence is Small ribosomal subunit protein uS19 (93 aa).

This sequence belongs to the universal ribosomal protein uS19 family.

Functionally, protein S19 forms a complex with S13 that binds strongly to the 16S ribosomal RNA. The protein is Small ribosomal subunit protein uS19 of Mycolicibacterium smegmatis (strain ATCC 700084 / mc(2)155) (Mycobacterium smegmatis).